The sequence spans 491 residues: Glutamyl-tRNA(Gln) amidotransferase subunit A (491 aa).

Catalysis depends on charge relay system residues lysine 77 and serine 152. The Acyl-ester intermediate role is filled by serine 176.

This sequence belongs to the amidase family. GatA subfamily. In terms of assembly, heterotrimer of A, B and C subunits.

The enzyme catalyses L-glutamyl-tRNA(Gln) + L-glutamine + ATP + H2O = L-glutaminyl-tRNA(Gln) + L-glutamate + ADP + phosphate + H(+). Its function is as follows. Allows the formation of correctly charged Gln-tRNA(Gln) through the transamidation of misacylated Glu-tRNA(Gln) in organisms which lack glutaminyl-tRNA synthetase. The reaction takes place in the presence of glutamine and ATP through an activated gamma-phospho-Glu-tRNA(Gln). In Chlamydia felis (strain Fe/C-56) (Chlamydophila felis), this protein is Glutamyl-tRNA(Gln) amidotransferase subunit A.